A 103-amino-acid polypeptide reads, in one-letter code: Putative membrane protein insertion efficiency factor (103 aa).

This sequence belongs to the UPF0161 family.

It localises to the cell inner membrane. In terms of biological role, could be involved in insertion of integral membrane proteins into the membrane. The chain is Putative membrane protein insertion efficiency factor from Chlamydia abortus (strain DSM 27085 / S26/3) (Chlamydophila abortus).